Here is a 386-residue protein sequence, read N- to C-terminus: AT-hook motif nuclear-localized protein 8 (386 aa).

Disordered stretches follow at residues Met1–Thr175 and Lys303–His372. A compositionally biased stretch (low complexity) spans Gln54–Gln70. Basic residues predominate over residues Val101–Lys110. Positions Lys102 to Lys110 match the Bipartite nuclear localization signal motif. Positions Lys102–Asp114 form a DNA-binding region, a.T hook 1. Over residues Pro126–Tyr135 the composition is skewed to polar residues. The segment covering Gly136–Gly147 has biased composition (gly residues). A DNA-binding region (a.T hook 2) is located at residues Lys155–Lys167. Residues Gly174–Glu316 form the PPC domain. Composition is skewed to low complexity over residues Gly328–Glu337 and Gln361–His372.

Its subcellular location is the nucleus. In terms of biological role, transcription factor that specifically binds AT-rich DNA sequences related to the nuclear matrix attachment regions (MARs). This is AT-hook motif nuclear-localized protein 8 from Arabidopsis thaliana (Mouse-ear cress).